Here is a 115-residue protein sequence, read N- to C-terminus: T cell receptor beta variable 7-2 (115 aa).

The first 21 residues, Met1–Ala21, serve as a signal peptide directing secretion. Positions Gly22–Leu115 constitute an Ig-like domain. Cysteines 42 and 111 form a disulfide.

As to quaternary structure, alpha-beta TR is a heterodimer composed of an alpha and beta chain; disulfide-linked. The alpha-beta TR is associated with the transmembrane signaling CD3 coreceptor proteins to form the TR-CD3 (TcR or TCR). The assembly of alpha-beta TR heterodimers with CD3 occurs in the endoplasmic reticulum where a single alpha-beta TR heterodimer associates with one CD3D-CD3E heterodimer, one CD3G-CD3E heterodimer and one CD247 homodimer forming a stable octameric structure. CD3D-CD3E and CD3G-CD3E heterodimers preferentially associate with TR alpha and TR beta chains, respectively. The association of the CD247 homodimer is the last step of TcR assembly in the endoplasmic reticulum and is required for transport to the cell surface.

It is found in the cell membrane. Its function is as follows. V region of the variable domain of T cell receptor (TR) beta chain that participates in the antigen recognition. Alpha-beta T cell receptors are antigen specific receptors which are essential to the immune response and are present on the cell surface of T lymphocytes. Recognize peptide-major histocompatibility (MH) (pMH) complexes that are displayed by antigen presenting cells (APC), a prerequisite for efficient T cell adaptive immunity against pathogens. Binding of alpha-beta TR to pMH complex initiates TR-CD3 clustering on the cell surface and intracellular activation of LCK that phosphorylates the ITAM motifs of CD3G, CD3D, CD3E and CD247 enabling the recruitment of ZAP70. In turn ZAP70 phosphorylates LAT, which recruits numerous signaling molecules to form the LAT signalosome. The LAT signalosome propagates signal branching to three major signaling pathways, the calcium, the mitogen-activated protein kinase (MAPK) kinase and the nuclear factor NF-kappa-B (NF-kB) pathways, leading to the mobilization of transcription factors that are critical for gene expression and essential for T cell growth and differentiation. The T cell repertoire is generated in the thymus, by V-(D)-J rearrangement. This repertoire is then shaped by intrathymic selection events to generate a peripheral T cell pool of self-MH restricted, non-autoaggressive T cells. Post-thymic interaction of alpha-beta TR with the pMH complexes shapes TR structural and functional avidity. In Homo sapiens (Human), this protein is T cell receptor beta variable 7-2.